The sequence spans 130 residues: Fluoride-specific ion channel FluC (130 aa).

The next 4 membrane-spanning stretches (helical) occupy residues 7 to 27 (VLAICIGASLGALARWRLGLW), 36 to 56 (LGTLAANLIGGYLIGICVAVF), 69 to 89 (ALITGFLGGLTTFSSFSAEVV), and 99 to 119 (LGFGTAGLHLFGSLLLTLAGI). Positions 76 and 79 each coordinate Na(+).

This sequence belongs to the fluoride channel Fluc/FEX (TC 1.A.43) family.

It is found in the cell inner membrane. It carries out the reaction fluoride(in) = fluoride(out). Na(+) is not transported, but it plays an essential structural role and its presence is essential for fluoride channel function. Its function is as follows. Fluoride-specific ion channel. Important for reducing fluoride concentration in the cell, thus reducing its toxicity. This Albidiferax ferrireducens (strain ATCC BAA-621 / DSM 15236 / T118) (Rhodoferax ferrireducens) protein is Fluoride-specific ion channel FluC.